Consider the following 387-residue polypeptide: Leucine aminopeptidase 1 (387 aa).

The first 18 residues, Met-1–Ala-18, serve as a signal peptide directing secretion. The propeptide occupies Arg-19–Lys-86. N-linked (GlcNAc...) asparagine glycosylation occurs at Asn-179. Zn(2+) is bound by residues His-187, Asp-206, Glu-245, and Asp-272. An intrachain disulfide couples Cys-321 to Cys-325. His-354 contacts Zn(2+).

Belongs to the peptidase M28 family. M28E subfamily. Monomer. Requires Zn(2+) as cofactor.

The protein localises to the secreted. In terms of biological role, extracellular aminopeptidase that allows assimilation of proteinaceous substrates. The polypeptide is Leucine aminopeptidase 1 (lap1) (Sclerotinia sclerotiorum (strain ATCC 18683 / 1980 / Ss-1) (White mold)).